Here is a 285-residue protein sequence, read N- to C-terminus: Bifunctional protein FolD (285 aa).

NADP(+) contacts are provided by residues 165–167 (GRS) and Ser-190.

Belongs to the tetrahydrofolate dehydrogenase/cyclohydrolase family. In terms of assembly, homodimer.

The enzyme catalyses (6R)-5,10-methylene-5,6,7,8-tetrahydrofolate + NADP(+) = (6R)-5,10-methenyltetrahydrofolate + NADPH. It carries out the reaction (6R)-5,10-methenyltetrahydrofolate + H2O = (6R)-10-formyltetrahydrofolate + H(+). It functions in the pathway one-carbon metabolism; tetrahydrofolate interconversion. Catalyzes the oxidation of 5,10-methylenetetrahydrofolate to 5,10-methenyltetrahydrofolate and then the hydrolysis of 5,10-methenyltetrahydrofolate to 10-formyltetrahydrofolate. The polypeptide is Bifunctional protein FolD (Burkholderia orbicola (strain AU 1054)).